The following is a 307-amino-acid chain: Beta-lactamase (307 aa).

Residues methionine 1–glycine 26 form the signal peptide. The N-palmitoyl cysteine moiety is linked to residue cysteine 27. Cysteine 27 carries the S-diacylglycerol cysteine lipid modification. Serine 86 acts as the Acyl-ester intermediate in catalysis. Catalysis depends on glutamate 182, which acts as the Proton acceptor. Lysine 248 to glycine 250 contacts substrate.

The protein belongs to the class-A beta-lactamase family. In terms of processing, large exopenicillinase is the primary secretion product; it can be converted to small exopenicillinase.

The protein localises to the cell membrane. The catalysed reaction is a beta-lactam + H2O = a substituted beta-amino acid. The polypeptide is Beta-lactamase (penP) (Bacillus licheniformis).